We begin with the raw amino-acid sequence, 236 residues long: Leucyl/phenylalanyl-tRNA--protein transferase (236 aa).

It belongs to the L/F-transferase family.

It is found in the cytoplasm. The catalysed reaction is N-terminal L-lysyl-[protein] + L-leucyl-tRNA(Leu) = N-terminal L-leucyl-L-lysyl-[protein] + tRNA(Leu) + H(+). It carries out the reaction N-terminal L-arginyl-[protein] + L-leucyl-tRNA(Leu) = N-terminal L-leucyl-L-arginyl-[protein] + tRNA(Leu) + H(+). It catalyses the reaction L-phenylalanyl-tRNA(Phe) + an N-terminal L-alpha-aminoacyl-[protein] = an N-terminal L-phenylalanyl-L-alpha-aminoacyl-[protein] + tRNA(Phe). Its function is as follows. Functions in the N-end rule pathway of protein degradation where it conjugates Leu, Phe and, less efficiently, Met from aminoacyl-tRNAs to the N-termini of proteins containing an N-terminal arginine or lysine. The sequence is that of Leucyl/phenylalanyl-tRNA--protein transferase from Vibrio campbellii (strain ATCC BAA-1116).